A 288-amino-acid chain; its full sequence is MDVTAKYELIGLMAYPIRHSLSPEMQNKALEKAGLPFTYMAFEVDNDTFPAAIEGLKALKMRGTGVSMPNKQLACEYVDELTPAAKLVGAINTIVNDDGYLRGYNTDGTGHIRAIKESGFDIKGKTMVLLGAGGASTAIGAQGAIEGLKEIKLFNRRDEFFDKALAFAQRVNENTDCVVTVTDLADQQAFAEALASADILTNGTKVGMKPLENESLVNDISLLHPGLLVTECVYNPHMTKLLQQAQQAGCKTIDGYGMLLWQGAEQFTLWTGKDFPLEYVKQVMGFGA.

Residues Lys-71 and Asp-107 each contribute to the substrate site. NAD(+) contacts are provided by residues 132 to 135, 155 to 158, Lys-205, 232 to 235, and Gly-255; these read AGGA, NRRD, and CVYN.

It belongs to the shikimate dehydrogenase family. As to quaternary structure, homodimer.

The catalysed reaction is L-quinate + NAD(+) = 3-dehydroquinate + NADH + H(+). It carries out the reaction L-quinate + NADP(+) = 3-dehydroquinate + NADPH + H(+). The enzyme catalyses shikimate + NADP(+) = 3-dehydroshikimate + NADPH + H(+). It catalyses the reaction shikimate + NAD(+) = 3-dehydroshikimate + NADH + H(+). Its pathway is metabolic intermediate biosynthesis; chorismate biosynthesis; chorismate from D-erythrose 4-phosphate and phosphoenolpyruvate: step 4/7. The actual biological function of YdiB remains unclear, nor is it known whether 3-dehydroshikimate or quinate represents the natural substrate. Catalyzes the reversible NAD-dependent reduction of both 3-dehydroshikimate (DHSA) and 3-dehydroquinate to yield shikimate (SA) and quinate, respectively. It can use both NAD or NADP for catalysis, however it has higher catalytic efficiency with NAD. The sequence is that of Quinate/shikimate dehydrogenase from Escherichia coli O7:K1 (strain IAI39 / ExPEC).